The primary structure comprises 632 residues: Golgin subfamily A member 8O (632 aa).

Positions 1 to 76 (MAEETQHNKL…TSSATLKDLE (76 aa)) are disordered. Positions 38 to 50 (TNGSIPETATSGG) are enriched in polar residues. 2 coiled-coil regions span residues 85–150 (VLDS…TDLY) and 209–421 (ELEQ…SLMA). Disordered regions lie at residues 423–452 (PGEG…DPES), 505–524 (DAAL…DEGE), and 552–612 (NSAD…EHPG). The segment covering 427–440 (HGGEHLDSEGEEAP) has biased composition (basic and acidic residues). Positions 508–520 (LGGGHHQAGAQGG) are enriched in gly residues. Positions 569–578 (AADKHGDLRE) are enriched in basic and acidic residues.

Belongs to the GOLGA6 family.

In Homo sapiens (Human), this protein is Golgin subfamily A member 8O (GOLGA8O).